The following is a 184-amino-acid chain: Ribosome-recycling factor (184 aa).

This sequence belongs to the RRF family.

The protein resides in the cytoplasm. Responsible for the release of ribosomes from messenger RNA at the termination of protein biosynthesis. May increase the efficiency of translation by recycling ribosomes from one round of translation to another. This is Ribosome-recycling factor from Acinetobacter baumannii (strain AB307-0294).